An 814-amino-acid polypeptide reads, in one-letter code: Spore development regulator umv1 (814 aa).

Disordered regions lie at residues 1–36, 96–134, 267–333, 407–441, 457–501, and 539–814; these read MSRP…GSTE, HDRP…VRRG, QGLK…MPRS, PPRD…RAGP, PVRS…ASLT, and QSSG…NQPY. Residues 7-18 show a composition bias toward polar residues; that stretch reads RSGNASTPQGTS. Positions 53–274 constitute a Velvet domain; sequence RDHIEYQLTV…AEQGLKVRVR (222 aa). A compositionally biased stretch (basic residues) spans 271-285; it reads VRVRKHPRSRRRGSK. Residues 407 to 423 are compositionally biased toward basic and acidic residues; that stretch reads PPRDFADGRYMDGDYPP. A Nuclear localization signal motif is present at residues 438–445; that stretch reads RAGPSEYS. The span at 620–631 shows a compositional bias: low complexity; sequence AAARRSPIPSAR. Basic and acidic residues-rich tracts occupy residues 723-741 and 760-796; these read TRDR…DRDQ and GELD…RRDF. Residues 800 to 814 show a composition bias toward polar residues; the sequence is TMPSKPSSRGHNQPY.

This sequence belongs to the velvet family. VosA subfamily. In terms of assembly, forms a heterodimeric complex with velB; the formation of the VEL2-VOS1 complex is light-dependent.

It localises to the nucleus. Its function is as follows. Component of the velB-VosA heterodimeric complex that plays a dual role in activating genes associated with spore maturation and repressing certain development-associated genes. The complex binds DNA through the DNA-binding domain of vosA that recognizes an 11-nucleotide consensus sequence 5'-CTGGCCGCGGC-3' consisting of two motifs in the promoters of key developmental regulatory genes. Required for gall induction and teliospore formation on seedlings. This chain is Spore development regulator umv1, found in Mycosarcoma maydis (Corn smut fungus).